We begin with the raw amino-acid sequence, 265 residues long: Undecaprenyl-diphosphatase (265 aa).

Helical transmembrane passes span 38–58 (RSDF…CLAL), 75–95 (RDYV…GLIV), 108–128 (PVAW…HFAG), 135–155 (VVTW…GVFP), 181–201 (FVFM…LLEM), 215–235 (VAVA…WLLG), and 244–264 (VFAV…PAAA).

The protein belongs to the UppP family.

Its subcellular location is the cell inner membrane. It catalyses the reaction di-trans,octa-cis-undecaprenyl diphosphate + H2O = di-trans,octa-cis-undecaprenyl phosphate + phosphate + H(+). Its function is as follows. Catalyzes the dephosphorylation of undecaprenyl diphosphate (UPP). Confers resistance to bacitracin. The chain is Undecaprenyl-diphosphatase from Xanthomonas euvesicatoria pv. vesicatoria (strain 85-10) (Xanthomonas campestris pv. vesicatoria).